A 622-amino-acid polypeptide reads, in one-letter code: Palmitoyl-protein thioesterase-dolichyl pyrophosphate phosphatase fusion 1 (622 aa).

A signal peptide spans 1 to 24 (MLSCSSFLIFFLFSWVLLPMKSFA). The Lumenal segment spans residues 25 to 405 (IPIISLDKVR…NVSEEKGPKS (381 aa)). C106 and C138 are disulfide-bonded. The active site involves S125. N-linked (GlcNAc...) asparagine glycosylation is present at N223. Residue D245 is part of the active site. N260 is a glycosylation site (N-linked (GlcNAc...) asparagine). H298 is a catalytic residue. The N-linked (GlcNAc...) asparagine glycan is linked to N396. A helical membrane pass occupies residues 406–426 (FANLAFITIFSHFFYHIDDMW). Topologically, residues 427–428 (RS) are cytoplasmic. A helical transmembrane segment spans residues 429-449 (TLGLFSLIPQIIGIIYLTVMF). Topologically, residues 450–488 (TGRELDTFMQFGGQVVNEFINYVVKVSLKYPRPADIEYG) are lumenal. A helical membrane pass occupies residues 489-511 (VGYGMPSSHSQFMGFFSAYMIAW). Over 512 to 519 (DYKYRRSQ) the chain is Cytoplasmic. Residues 520–540 (CFSMLSFAKYAIYLTLSTFVC) traverse the membrane as a helical segment. At 541-552 (SSRYLLDFHYLT) the chain is on the lumenal side. Residues 553-573 (QVVYGYMIGFGVGLFWVYLVG) form a helical membrane-spanning segment. Topologically, residues 574-622 (KLRSLGVTKWLLSLPPLQFFYIKDTIPHSKDNHKRQWLESKQFKNQKSN) are cytoplasmic.

It in the N-terminal section; belongs to the palmitoyl-protein thioesterase family. The protein in the C-terminal section; belongs to the dolichyldiphosphatase family. Post-translationally, proteolytically cleaved, possibly by krp1.

The protein resides in the vacuole. Its subcellular location is the endoplasmic reticulum membrane. It catalyses the reaction S-hexadecanoyl-L-cysteinyl-[protein] + H2O = L-cysteinyl-[protein] + hexadecanoate + H(+). The catalysed reaction is a di-trans,poly-cis-dolichyl diphosphate + H2O = a di-trans,poly-cis-dolichyl phosphate + phosphate + H(+). Its function is as follows. Essential protein. Removes thioester-linked fatty acyl groups such as palmitate from modified cysteine residues in proteins or peptides during vacuolar degradation. Required for efficient N-glycosylation. Necessary for maintaining optimal levels of dolichol-linked oligosaccharides. The protein is Palmitoyl-protein thioesterase-dolichyl pyrophosphate phosphatase fusion 1 (pdf1) of Schizosaccharomyces pombe (strain 972 / ATCC 24843) (Fission yeast).